We begin with the raw amino-acid sequence, 307 residues long: MmsAB operon regulatory protein (307 aa).

The HTH araC/xylS-type domain occupies Asp-201–Arg-299. DNA-binding regions (H-T-H motif) lie at residues Glu-218–Thr-239 and Val-266–Met-289.

In terms of biological role, regulatory protein for the mmsAB operon. Activates the transcription of the mmsAB genes. The polypeptide is MmsAB operon regulatory protein (Pseudomonas aeruginosa (strain ATCC 15692 / DSM 22644 / CIP 104116 / JCM 14847 / LMG 12228 / 1C / PRS 101 / PAO1)).